The primary structure comprises 470 residues: D-serine/D-alanine/glycine transporter (470 aa).

Helical transmembrane passes span 30–50 (LIAIGGAIGTGLFMGSGKTIS), 51–71 (LAGPSIIFVYMIIGFMLFFVM), 102–122 (FTGWTYWFCWVVTGMADVVAI), 137–157 (VASLAVIVLLLTLNLATVKMF), 162–182 (FWFAMIKIVAIVSLIVVGLVM), 211–231 (LSGFFAGFQIAVFAFVGIELV), 256–276 (IIMFYVFALIVIMSVTPWSSV), 283–303 (FVELFVLVGLPAAASVINFVV), 350–370 (FSCICLLGGVVMLYVNPSVIG), 371–391 (AFTMITTVSAILFMFVWTIIL), 413–433 (PLGKLMCWVCMAFFVFVVVLL), and 441–461 (QALLVTPLWFIALGLGWLFIG).

It belongs to the amino acid-polyamine-organocation (APC) superfamily. Amino acid transporter (AAT) (TC 2.A.3.1) family.

The protein localises to the cell inner membrane. It carries out the reaction D-alanine(in) + H(+)(in) = D-alanine(out) + H(+)(out). The catalysed reaction is D-serine(out) + H(+)(out) = D-serine(in) + H(+)(in). The enzyme catalyses glycine(in) + H(+)(in) = glycine(out) + H(+)(out). Functionally, permease that is involved in the transport across the cytoplasmic membrane of D-alanine, D-serine and glycine. This is D-serine/D-alanine/glycine transporter (cycA) from Escherichia coli O157:H7.